We begin with the raw amino-acid sequence, 297 residues long: Flavin-dependent thymidylate synthase (297 aa).

A ThyX domain is found at 41–251 (GFVRLVDYMG…PLTYAAFVEY (211 aa)). FAD is bound by residues Thr87, 110-112 (RHR), and Glu118. Residues 107–110 (QWVR), 118–122 (EYSAR), and Arg190 contribute to the dUMP site. The ThyX motif signature appears at 110 to 120 (RHRTANVNEYS). Residues 206–208 (DLH) and His212 contribute to the FAD site. DUMP is bound at residue Arg217. The Involved in ionization of N3 of dUMP, leading to its activation role is filled by Arg217.

This sequence belongs to the thymidylate synthase ThyX family. Homotetramer. FAD serves as cofactor.

It carries out the reaction dUMP + (6R)-5,10-methylene-5,6,7,8-tetrahydrofolate + NADPH + H(+) = dTMP + (6S)-5,6,7,8-tetrahydrofolate + NADP(+). It functions in the pathway pyrimidine metabolism; dTTP biosynthesis. In terms of biological role, catalyzes the reductive methylation of 2'-deoxyuridine-5'-monophosphate (dUMP) to 2'-deoxythymidine-5'-monophosphate (dTMP) while utilizing 5,10-methylenetetrahydrofolate (mTHF) as the methyl donor, and NADPH and FADH(2) as the reductant. The chain is Flavin-dependent thymidylate synthase from Ehrlichia ruminantium (strain Gardel).